The following is a 772-amino-acid chain: RNA exonuclease 5 (772 aa).

Residues 1–10 show a composition bias toward basic and acidic residues; sequence MEPEREGTER. The segment at 1–26 is disordered; that stretch reads MEPEREGTERHPRKVRKRRQAPNKLV. Basic residues predominate over residues 11–21; it reads HPRKVRKRRQA. The Exonuclease domain occupies 228 to 376; that stretch reads LFGLDCEMCL…EDARIILELA (149 aa). RRM domains lie at 505–579 and 600–679; these read STVY…RPVT and GSIY…RHLH.

This chain is RNA exonuclease 5 (REXO5), found in Macaca fascicularis (Crab-eating macaque).